We begin with the raw amino-acid sequence, 101 residues long: Small ribosomal subunit protein uS17 (101 aa).

It belongs to the universal ribosomal protein uS17 family. Part of the 30S ribosomal subunit.

Functionally, one of the primary rRNA binding proteins, it binds specifically to the 5'-end of 16S ribosomal RNA. The chain is Small ribosomal subunit protein uS17 from Koribacter versatilis (strain Ellin345).